Reading from the N-terminus, the 225-residue chain is 3-dehydroquinate dehydratase (225 aa).

Residues Ser6, 30 to 32 (EWR), and Arg62 contribute to the 3-dehydroquinate site. His118 serves as the catalytic Proton donor/acceptor. The Schiff-base intermediate with substrate role is filled by Lys143. The 3-dehydroquinate site is built by Arg186, Ser205, and Gln209.

It belongs to the type-I 3-dehydroquinase family. Homodimer.

The enzyme catalyses 3-dehydroquinate = 3-dehydroshikimate + H2O. The protein operates within metabolic intermediate biosynthesis; chorismate biosynthesis; chorismate from D-erythrose 4-phosphate and phosphoenolpyruvate: step 3/7. In terms of biological role, involved in the third step of the chorismate pathway, which leads to the biosynthesis of aromatic amino acids. Catalyzes the cis-dehydration of 3-dehydroquinate (DHQ) and introduces the first double bond of the aromatic ring to yield 3-dehydroshikimate. This Streptococcus pneumoniae (strain Hungary19A-6) protein is 3-dehydroquinate dehydratase.